The chain runs to 184 residues: Probable chemoreceptor glutamine deamidase CheD (184 aa).

It belongs to the CheD family.

The enzyme catalyses L-glutaminyl-[protein] + H2O = L-glutamyl-[protein] + NH4(+). In terms of biological role, probably deamidates glutamine residues to glutamate on methyl-accepting chemotaxis receptors (MCPs), playing an important role in chemotaxis. The protein is Probable chemoreceptor glutamine deamidase CheD of Rhizobium etli (strain CIAT 652).